The primary structure comprises 548 residues: Chaperonin GroEL (548 aa).

ATP-binding positions include 30–33 (TLGP), K51, 87–91 (DGTTT), G415, 479–481 (NAA), and D495.

It belongs to the chaperonin (HSP60) family. As to quaternary structure, forms a cylinder of 14 subunits composed of two heptameric rings stacked back-to-back. Interacts with the co-chaperonin GroES.

The protein localises to the cytoplasm. The enzyme catalyses ATP + H2O + a folded polypeptide = ADP + phosphate + an unfolded polypeptide.. Functionally, together with its co-chaperonin GroES, plays an essential role in assisting protein folding. The GroEL-GroES system forms a nano-cage that allows encapsulation of the non-native substrate proteins and provides a physical environment optimized to promote and accelerate protein folding. The polypeptide is Chaperonin GroEL (Pseudomonas fluorescens (strain Pf0-1)).